Reading from the N-terminus, the 318-residue chain is NADH-ubiquinone oxidoreductase chain 1 (318 aa).

A run of 8 helical transmembrane segments spans residues 2–22 (FMINLFSLIIPILLAVAFLTL), 69–89 (FMFTIAPALALTLALTMWVPL), 102–122 (MLFILAMSSLAVYSILWSGWA), 146–166 (LAIILLPTMLMNGSFTLSTLT), 171–191 (HLWLIFPLWPLAMMWFVSTLA), 231–251 (IIMMNALTAILFLGTFHNPLL), 253–273 (EAHTINLILKTSLLTICFLWV), and 294–314 (LPLTLALCMWHMSIPIMLACI).

Belongs to the complex I subunit 1 family. In terms of assembly, core subunit of respiratory chain NADH dehydrogenase (Complex I) which is composed of 45 different subunits.

It is found in the mitochondrion inner membrane. The catalysed reaction is a ubiquinone + NADH + 5 H(+)(in) = a ubiquinol + NAD(+) + 4 H(+)(out). Core subunit of the mitochondrial membrane respiratory chain NADH dehydrogenase (Complex I) which catalyzes electron transfer from NADH through the respiratory chain, using ubiquinone as an electron acceptor. Essential for the catalytic activity and assembly of complex I. The chain is NADH-ubiquinone oxidoreductase chain 1 (MT-ND1) from Dugong dugon (Dugong).